The following is a 396-amino-acid chain: Homoserine O-acetyltransferase (396 aa).

Positions 53 to 370 (NAILVCHALT…DRGHDAFLLE (318 aa)) constitute an AB hydrolase-1 domain. The active-site Nucleophile is the Ser-158. Arg-228 serves as a coordination point for substrate. Residues Asp-331 and His-364 contribute to the active site. A substrate-binding site is contributed by Asp-365.

Belongs to the AB hydrolase superfamily. MetX family. In terms of assembly, homodimer.

It localises to the cytoplasm. The catalysed reaction is L-homoserine + acetyl-CoA = O-acetyl-L-homoserine + CoA. Its pathway is amino-acid biosynthesis; L-methionine biosynthesis via de novo pathway; O-acetyl-L-homoserine from L-homoserine: step 1/1. Functionally, transfers an acetyl group from acetyl-CoA to L-homoserine, forming acetyl-L-homoserine. The polypeptide is Homoserine O-acetyltransferase (Gluconobacter oxydans (strain 621H) (Gluconobacter suboxydans)).